The sequence spans 388 residues: Proteasomal ubiquitin receptor ADRM1 homolog rpn1302 (388 aa).

Positions 15 to 132 constitute a Pru domain; that stretch reads RGKYGLVSVK…SLINQLIADP (118 aa). Disordered stretches follow at residues 202 to 227 and 368 to 388; these read RASSESNLNGPHATAGENGEDHEEAT and SDGEVEEEGDVEMRESNEKDE. Acidic residues predominate over residues 368–377; the sequence is SDGEVEEEGD. The segment covering 378–388 has biased composition (basic and acidic residues); that stretch reads VEMRESNEKDE.

This sequence belongs to the ADRM1 family. Component of the 19S proteasome regulatory particle complex. The 2 S.pombe rpn13 homologs, rpn1301 and rpn1302 are present at a 0.2-1 ratio.

Its subcellular location is the cytoplasm. It localises to the nucleus. Its function is as follows. Component of the 26S proteasome, a multiprotein complex involved in the ATP-dependent degradation of ubiquitinated proteins. This complex plays a key role in the maintenance of protein homeostasis by removing misfolded or damaged proteins, which could impair cellular functions, and by removing proteins whose functions are no longer required. Therefore, the proteasome participates in numerous cellular processes, including cell cycle progression, apoptosis, or DNA damage repair. Within the complex, functions as a proteasomal ubiquitin receptor. The protein is Proteasomal ubiquitin receptor ADRM1 homolog rpn1302 (rpn1302) of Schizosaccharomyces pombe (strain 972 / ATCC 24843) (Fission yeast).